Reading from the N-terminus, the 1331-residue chain is Contactin-associated protein-like 2 (1331 aa).

Positions 1 to 27 (MLAAPRAGCGAALLLWIVSSCLCRAWT) are cleaved as a signal peptide. Over 28–1262 (APSTSQKCDE…IRNGVNRNSA (1235 aa)) the chain is Extracellular. The F5/8 type C domain occupies 35 to 181 (CDEPLVSGLP…IGLRIEVYGC (147 aa)). A disulfide bridge connects residues Cys35 and Cys181. Laminin G-like domains are found at residues 187–368 (VINF…SFSC) and 373–552 (TVPV…IDMC). 8 N-linked (GlcNAc...) asparagine glycosylation sites follow: Asn289, Asn346, Asn363, Asn379, Asn436, Asn506, Asn507, and Asn546. Cys336 and Cys368 are joined by a disulfide. Disulfide bonds link Cys520-Cys552, Cys558-Cys569, Cys563-Cys578, and Cys580-Cys590. The 38-residue stretch at 554–591 (IIDRCVPNHCERGGKCSQTWDSFKCTCDETGYTGATCH) folds into the EGF-like 1 domain. A Fibrinogen C-terminal domain is found at 592–798 (NSIYEPSCEA…LRCQGDRNYW (207 aa)). N-linked (GlcNAc...) asparagine glycans are attached at residues Asn630 and Asn735. The region spanning 799–963 (NAASFPNPSS…KVTSGFISGC (165 aa)) is the Laminin G-like 3 domain. Disulfide bonds link Cys936–Cys963, Cys967–Cys980, Cys974–Cys989, and Cys991–Cys1001. The EGF-like 2 domain maps to 964–1002 (SGHCTSYGTNCENGGKCLERYHGYSCDCSNTAYDGTFCN). One can recognise a Laminin G-like 4 domain in the interval 1023–1214 (ATNARDSSSR…IQGELVESNC (192 aa)). 2 N-linked (GlcNAc...) asparagine glycosylation sites follow: Asn1116 and Asn1198. Residues Cys1178 and Cys1214 are joined by a disulfide bond. The chain crosses the membrane as a helical span at residues 1263–1283 (IIGGVIAVVIFTILCTLVFLI). The Cytoplasmic segment spans residues 1284 to 1331 (RYMFRHKGTYHTNEAKGAESAESADAAIMNNDPNFTETIDESKKEWLI). Ser1303 and Ser1306 each carry phosphoserine.

It belongs to the neurexin family. As to quaternary structure, interacts (via C-terminus) with KCNA2.

It is found in the membrane. It localises to the cell projection. The protein resides in the axon. Its subcellular location is the cell junction. The protein localises to the paranodal septate junction. Its function is as follows. Required for gap junction formation. Required, with CNTNAP1, for radial and longitudinal organization of myelinated axons. Plays a role in the formation of functional distinct domains critical for saltatory conduction of nerve impulses in myelinated nerve fibers. Demarcates the juxtaparanodal region of the axo-glial junction. The protein is Contactin-associated protein-like 2 (CNTNAP2) of Pongo abelii (Sumatran orangutan).